The sequence spans 384 residues: Spermidine/putrescine import ATP-binding protein PotA (384 aa).

In terms of domain architecture, ABC transporter spans 6-238 (IAFKNVSKVF…PINHFVATFI (233 aa)). 40-47 (GASGSGKS) contacts ATP.

Belongs to the ABC transporter superfamily. Spermidine/putrescine importer (TC 3.A.1.11.1) family. As to quaternary structure, the complex is composed of two ATP-binding proteins (PotA), two transmembrane proteins (PotB and PotC) and a solute-binding protein (PotD).

It localises to the cell membrane. The enzyme catalyses ATP + H2O + polyamine-[polyamine-binding protein]Side 1 = ADP + phosphate + polyamineSide 2 + [polyamine-binding protein]Side 1.. Its function is as follows. Part of the ABC transporter complex PotABCD involved in spermidine/putrescine import. Responsible for energy coupling to the transport system. The sequence is that of Spermidine/putrescine import ATP-binding protein PotA from Streptococcus agalactiae serotype Ia (strain ATCC 27591 / A909 / CDC SS700).